The chain runs to 277 residues: Large ribosomal subunit protein uL2 (277 aa).

Disordered stretches follow at residues 1 to 20 (MGIR…SVSD), 27 to 55 (TQPE…RHRG), and 207 to 277 (KAGR…RNQS). Polar residues predominate over residues 27-48 (TQPEKSLTTYKHSSQGRNNRGV). Composition is skewed to basic residues over residues 207–220 (KAGR…RPHV) and 259–277 (TRNR…RNQS).

This sequence belongs to the universal ribosomal protein uL2 family. In terms of assembly, part of the 50S ribosomal subunit. Forms a bridge to the 30S subunit in the 70S ribosome.

In terms of biological role, one of the primary rRNA binding proteins. Required for association of the 30S and 50S subunits to form the 70S ribosome, for tRNA binding and peptide bond formation. It has been suggested to have peptidyltransferase activity; this is somewhat controversial. Makes several contacts with the 16S rRNA in the 70S ribosome. The protein is Large ribosomal subunit protein uL2 of Gloeothece citriformis (strain PCC 7424) (Cyanothece sp. (strain PCC 7424)).